Consider the following 495-residue polypeptide: Protein FAM83F (495 aa).

An N-acetylalanine modification is found at A2. The interval 2-294 is DUF1669; that stretch reads AESQLSCLDE…LYAISEEVNL (293 aa). Phosphoserine is present on S4. Disordered stretches follow at residues 341 to 362 and 384 to 495; these read QQREAGGNVEGQEEGSGGGESA and PISP…CVIS. Residues 447–458 show a composition bias toward low complexity; the sequence is PAVPSSMASSPS. A Phosphoserine modification is found at S477.

This sequence belongs to the FAM83 family. As to quaternary structure, directly interacts (via DUF1669) with CSNK1A1 and CSNK1A1L.

It localises to the cell membrane. The polypeptide is Protein FAM83F (Fam83f) (Mus musculus (Mouse)).